Here is an 85-residue protein sequence, read N- to C-terminus: Beta-insect depressant toxin Lqh-dprIT3e (85 aa).

The first 21 residues, 1 to 21 (MKLLLLLTISASMLIEGLVNA), serve as a signal peptide directing secretion. Residues 22 to 82 (DGYIRGGDGC…EWDYETDTCG (61 aa)) enclose the LCN-type CS-alpha/beta domain. 4 disulfides stabilise this stretch: Cys31/Cys81, Cys35/Cys56, Cys42/Cys63, and Cys46/Cys65. Gly82 is subject to Glycine amide.

It belongs to the long (4 C-C) scorpion toxin superfamily. Sodium channel inhibitor family. Beta subfamily. In terms of tissue distribution, expressed by the venom gland.

Its subcellular location is the secreted. Functionally, depressant insect beta-toxins cause a transient contraction paralysis followed by a slow flaccid paralysis. They bind voltage-independently at site-4 of sodium channels (Nav) and block action potentials, primarily by depolarizing the axonal membrane and suppressing the sodium current. This depressant toxin is active only on insects. It is found in a relatively small amount in the venom. The sequence is that of Beta-insect depressant toxin Lqh-dprIT3e from Leiurus hebraeus (Hebrew deathstalker scorpion).